The following is a 158-amino-acid chain: Transcription factor BTF3 homolog 4 (158 aa).

The 66-residue stretch at 33 to 98 (TADDKKLQSS…AEAKPITEML (66 aa)) folds into the NAC-A/B domain. A disordered region spans residues 124 to 158 (VLDSKAPKSEDIDEEDDDVPDLAENFDEASKNEAN). Positions 134–150 (DIDEEDDDVPDLAENFD) are enriched in acidic residues.

It belongs to the NAC-beta family.

This is Transcription factor BTF3 homolog 4 (BTF3L4) from Gallus gallus (Chicken).